A 418-amino-acid polypeptide reads, in one-letter code: MAHTLAQKILQKHTDQQVGEAGQIVRCRVSMALANDITAPLAIKSFRAMGAGKVFDKDRVALVMDHFTPQKDIDSAIQVKNTREFAAQMGITHYYEGGEAGVEHALLPELGLVGPGDIVVGADSHTCTYGGLGAFATGLGSTDVAGAMALGETWFKVPPSIRVSYRGTMPAHVGAKDLVLQLIGHIGVDGALYKALEFDGPVVDAMSVEGRMTIANMAIEAGGKCGLFPSDDLTLAYTAARGRNDEKLSADQDAVYERSLSFDVSDLAPQIACPHLPENVRPVTEVQGVQIHQAVIGSCTNGRISDLREAAAVLRGRKVHKSVRCIVLPATPGIWKQALREGLIETFMDAGCIVGPATCGPCLGGHMGILADGERAIATTNRNFRGRMGSLESEVYLSNPSVAAASAVAGEIADPRGL.

3 residues coordinate [4Fe-4S] cluster: cysteine 299, cysteine 359, and cysteine 362.

It belongs to the aconitase/IPM isomerase family. LeuC type 2 subfamily. In terms of assembly, heterodimer of LeuC and LeuD. [4Fe-4S] cluster is required as a cofactor.

It catalyses the reaction (2R,3S)-3-isopropylmalate = (2S)-2-isopropylmalate. Its pathway is amino-acid biosynthesis; L-leucine biosynthesis; L-leucine from 3-methyl-2-oxobutanoate: step 2/4. In terms of biological role, catalyzes the isomerization between 2-isopropylmalate and 3-isopropylmalate, via the formation of 2-isopropylmaleate. The sequence is that of 3-isopropylmalate dehydratase large subunit from Oleidesulfovibrio alaskensis (strain ATCC BAA-1058 / DSM 17464 / G20) (Desulfovibrio alaskensis).